Consider the following 407-residue polypeptide: Subtilisin-like protease CPC735_013710 (407 aa).

The N-terminal stretch at 1–17 (MQLLNLSLFFLLPFATA) is a signal peptide. Positions 18–115 (NPIPQDSQNI…VLPDQKIYLA (98 aa)) are excised as a propeptide. The region spanning 31-114 (QYIVTLKDGL…SVLPDQKIYL (84 aa)) is the Inhibitor I9 domain. A Peptidase S8 domain is found at 124-407 (GWNLGYMSSK…VAYNGIQEML (284 aa)). An N-linked (GlcNAc...) asparagine glycan is attached at asparagine 145. Active-site charge relay system residues include aspartate 162 and histidine 194. Residues asparagine 241, asparagine 254, and asparagine 341 are each glycosylated (N-linked (GlcNAc...) asparagine). The active-site Charge relay system is serine 350. Asparagine 381 carries N-linked (GlcNAc...) asparagine glycosylation.

It belongs to the peptidase S8 family.

Its subcellular location is the secreted. Its function is as follows. Secreted subtilisin-like serine protease with keratinolytic activity that contributes to pathogenicity. In Coccidioides posadasii (strain C735) (Valley fever fungus), this protein is Subtilisin-like protease CPC735_013710.